A 189-amino-acid polypeptide reads, in one-letter code: MRKSVIATGLALMMAVPFAANAADYVIDTKGAHASINFKVSHLGYSFIKGRFNTFSGDFSYDQNNIAASKVNVVVDTRSLDSNHAERDKHIRSGDFIDAGKFNTATFTSTKVMDKGDGKLDVMGDLTLHGVTKPITIAAEFVGAGQDPWGGQRAGFIGTTRLELADFNIPVMGTSSYVDMELHVEGIKK.

The N-terminal stretch at 1 to 22 (MRKSVIATGLALMMAVPFAANA) is a signal peptide.

The protein belongs to the UPF0312 family. Type 1 subfamily.

It is found in the periplasm. The chain is UPF0312 protein VV2_0231 from Vibrio vulnificus (strain CMCP6).